Reading from the N-terminus, the 444-residue chain is Bifunctional enolase 2/transcriptional activator (444 aa).

Residues His163 and Glu172 each coordinate substrate. Residue Glu215 is the Proton donor of the active site. Mg(2+)-binding residues include Asp250, Glu300, and Asp327. Glu300 and Asp327 together coordinate substrate. Catalysis depends on Lys352, which acts as the Proton acceptor. Residues Ser379–Ser382 and Lys403 each bind substrate.

It belongs to the enolase family. As to quaternary structure, homodimer. Mg(2+) serves as cofactor.

It is found in the cytoplasm. The protein resides in the cytosol. It localises to the nucleus. The protein localises to the mitochondrion outer membrane. The catalysed reaction is (2R)-2-phosphoglycerate = phosphoenolpyruvate + H2O. It participates in carbohydrate degradation; glycolysis; pyruvate from D-glyceraldehyde 3-phosphate: step 4/5. Functionally, multifunctional enzyme that acts as an enolase involved in the metabolism and as a positive regulator of cold-responsive gene transcription. Binds to the cis-element the gene promoter of STZ/ZAT10, a zinc finger transcriptional repressor. This chain is Bifunctional enolase 2/transcriptional activator (ENO2), found in Arabidopsis thaliana (Mouse-ear cress).